The primary structure comprises 266 residues: Segregation and condensation protein A (266 aa).

Belongs to the ScpA family. Component of a cohesin-like complex composed of ScpA, ScpB and the Smc homodimer, in which ScpA and ScpB bind to the head domain of Smc. The presence of the three proteins is required for the association of the complex with DNA.

It is found in the cytoplasm. In terms of biological role, participates in chromosomal partition during cell division. May act via the formation of a condensin-like complex containing Smc and ScpB that pull DNA away from mid-cell into both cell halves. The sequence is that of Segregation and condensation protein A from Coxiella burnetii (strain RSA 493 / Nine Mile phase I).